The sequence spans 261 residues: Zinc finger protein 664 (261 aa).

9 C2H2-type zinc fingers span residues 3–25 (YKCP…QKIH), 31–53 (HKCD…WRDH), 59–81 (YKCD…KKIH), 87–109 (YKCY…MRVH), 115–137 (YVCS…QRVH), 143–165 (FKCE…QRVH), 171–193 (YKCY…QRVH), 199–221 (YRCC…QRVH), and 227–249 (FKCD…QRVH). A Glycyl lysine isopeptide (Lys-Gly) (interchain with G-Cter in SUMO2) cross-link involves residue Lys-257.

This sequence belongs to the krueppel C2H2-type zinc-finger protein family.

Its subcellular location is the nucleus. Functionally, may be involved in transcriptional regulation. This Homo sapiens (Human) protein is Zinc finger protein 664.